Here is a 203-residue protein sequence, read N- to C-terminus: Large ribosomal subunit protein eL15 (203 aa).

A disordered region spans residues 160–186; the sequence is ESRGLTSTGKRSRGLNKGHRYNKTRAG. Basic residues predominate over residues 169–186; the sequence is KRSRGLNKGHRYNKTRAG.

Belongs to the eukaryotic ribosomal protein eL15 family. Component of the large ribosomal subunit (LSU). Mature N.crassa ribosomes consist of a small (40S) and a large (60S) subunit. The 40S small subunit contains 1 molecule of ribosomal RNA (18S rRNA) and at least 32 different proteins. The large 60S subunit contains 3 rRNA molecules (26S, 5.8S and 5S rRNA) and at least 42 different proteins.

It localises to the cytoplasm. In terms of biological role, component of the ribosome, a large ribonucleoprotein complex responsible for the synthesis of proteins in the cell. The small ribosomal subunit (SSU) binds messenger RNAs (mRNAs) and translates the encoded message by selecting cognate aminoacyl-transfer RNA (tRNA) molecules. The large subunit (LSU) contains the ribosomal catalytic site termed the peptidyl transferase center (PTC), which catalyzes the formation of peptide bonds, thereby polymerizing the amino acids delivered by tRNAs into a polypeptide chain. The nascent polypeptides leave the ribosome through a tunnel in the LSU and interact with protein factors that function in enzymatic processing, targeting, and the membrane insertion of nascent chains at the exit of the ribosomal tunnel. The sequence is that of Large ribosomal subunit protein eL15 (rpl-15) from Neurospora crassa (strain ATCC 24698 / 74-OR23-1A / CBS 708.71 / DSM 1257 / FGSC 987).